We begin with the raw amino-acid sequence, 116 residues long: Large ribosomal subunit protein uL18 (116 aa).

The protein belongs to the universal ribosomal protein uL18 family. Part of the 50S ribosomal subunit; part of the 5S rRNA/L5/L18/L25 subcomplex. Contacts the 5S and 23S rRNAs.

Functionally, this is one of the proteins that bind and probably mediate the attachment of the 5S RNA into the large ribosomal subunit, where it forms part of the central protuberance. The protein is Large ribosomal subunit protein uL18 of Pseudoalteromonas translucida (strain TAC 125).